Consider the following 477-residue polypeptide: UDP-N-acetylmuramate--L-alanine ligase (477 aa).

G112–T118 is a binding site for ATP.

It belongs to the MurCDEF family.

The protein localises to the cytoplasm. It catalyses the reaction UDP-N-acetyl-alpha-D-muramate + L-alanine + ATP = UDP-N-acetyl-alpha-D-muramoyl-L-alanine + ADP + phosphate + H(+). Its pathway is cell wall biogenesis; peptidoglycan biosynthesis. Functionally, cell wall formation. This Acidovorax ebreus (strain TPSY) (Diaphorobacter sp. (strain TPSY)) protein is UDP-N-acetylmuramate--L-alanine ligase.